A 1110-amino-acid chain; its full sequence is MKVPAYAEIGVTTNFSFLEGGSHPQDYVHEASRLGLEAIGIADRNTLAGVVRAYSELGNEDLIHKPRLLIGARLVFADGTPDVLAYPVDRAAYGRLCRLLSVGKLRGAKGECHLAVADLEAFSQGLSLVLMPPYRFQASAIAAALQRLTALESGGVWLGLTPYYRGDDKRRLARLKRVAWAARVPGIATNDVLYHHPERRALQDVLSCVREKTTIDKIGRRLEANAERHLKPAAEMARLFRADPDAIAETLRFAAGISFTLDELKYHYPDEPVPPGKTAQQHLEDLTWEGVAEYFPAGISDKLHATIDKELGIIAHRGYAQYFLTVHDIVRYARSQDILCQGRGSAANSAVCYVLGITCVDPTEIDLLFERFVSEERDEPPDIDVDFEHSRREEVMQYIYRRYGRHRAAIVATVIHYRPRSAIRDVGKALGLSEDVTAALADTVWGSWGKGLNEMQVKQAGLDPHNPLIGRAVELATELIGFPRHLSQHVGGYVLTQDRLDSYVPIGNAAMEGRTFIEWDKDDIDAIKMMKVDVLALGMLTCIRKGFDLIAQHKGVRYALSDIKSEDDNAVYQMLQRGESIGVFQVESRAQMNMLPRLKPKCFYDLVIEVAIVRPGPIQGDMVHPYLRRRNKQEPVVYPAPAGHAGDANELEVILGKTLGVPLFQEQAMRIAIEAAHFTPDEANQLRRAMATFRNVGTIGKFESKMVGNLVARGYDPVFAKNCFEQIKGFGSYGFPESHAASFAKLVYVSAWMKCEHPDAFCCALLNSQPMGFYAPAQIVGDARANEVEVRPVDVSFSDGQCTLEERCGKHHAVRLGFRQIDGFVWADPDEERVRREAGLLPSEDWAARIVAARARGPFNSLERFARLTALPKRALILLADADAFRSLGLDRRAALWAVRRLPDDVPLPLFEAASASEQLDENAAPLPQMPTAEHVVADYQTVRLSLKGHPMEFLRPLFAAERVVTCRSISESRVSGQRMRCAGVVLVRQRPGSAKGVVFITLEDETGIANLVVWPAVMETFRKEVMGARLLWVEGRIQASPEGVVHLVAERLSDRSFEMTRLSDNLAAPRLGELHEPLNDDRREHPDNPAQRIRHPRDVRILPPSRDFH.

The tract at residues 1072–1110 is disordered; the sequence is LGELHEPLNDDRREHPDNPAQRIRHPRDVRILPPSRDFH. Basic and acidic residues-rich tracts occupy residues 1073–1088 and 1097–1110; these read GELHEPLNDDRREHPD and PRDVRILPPSRDFH.

The protein belongs to the DNA polymerase type-C family. DnaE2 subfamily.

The protein localises to the cytoplasm. It carries out the reaction DNA(n) + a 2'-deoxyribonucleoside 5'-triphosphate = DNA(n+1) + diphosphate. In terms of biological role, DNA polymerase involved in damage-induced mutagenesis and translesion synthesis (TLS). It is not the major replicative DNA polymerase. This Rhodopseudomonas palustris (strain BisB5) protein is Error-prone DNA polymerase.